A 561-amino-acid polypeptide reads, in one-letter code: Inner membrane ABC transporter ATP-binding protein YddA (561 aa).

Residues Met-1–Thr-3 are Cytoplasmic-facing. The helical transmembrane segment at Ile-4–Leu-24 threads the bilayer. Topologically, residues Arg-25–Ser-31 are periplasmic. Residues Val-32–Leu-52 traverse the membrane as a helical segment. Residues Ile-35–Glu-337 form the ABC transmembrane type-1 domain. Residues Asn-53 to Lys-70 are Cytoplasmic-facing. The helical transmembrane segment at Leu-71–Asn-91 threads the bilayer. The Periplasmic portion of the chain corresponds to Lys-92–Thr-151. Residues Leu-152 to Leu-172 form a helical membrane-spanning segment. The Cytoplasmic segment spans residues Trp-173–Glu-187. A helical transmembrane segment spans residues Trp-188 to Phe-208. Over Thr-209 to Ser-290 the chain is Periplasmic. Residues Val-291–Leu-311 traverse the membrane as a helical segment. Residues Met-312 to Leu-561 are Cytoplasmic-facing. Residues Val-367–Leu-561 form the ABC transporter domain. Gly-400–Thr-407 contacts ATP.

Belongs to the ABC transporter superfamily.

It is found in the cell inner membrane. This Escherichia coli (strain K12) protein is Inner membrane ABC transporter ATP-binding protein YddA (yddA).